The sequence spans 123 residues: Fluoride-specific ion channel FluC (123 aa).

A run of 4 helical transmembrane segments spans residues 3–23, 34–54, 67–87, and 99–119; these read IAWV…LSNA, WGTL…FYLF, LVLV…LETL, and LLNM…GLVV. Residues Gly74 and Thr77 each contribute to the Na(+) site.

The protein belongs to the fluoride channel Fluc/FEX (TC 1.A.43) family.

It localises to the cell inner membrane. The enzyme catalyses fluoride(in) = fluoride(out). Its activity is regulated as follows. Na(+) is not transported, but it plays an essential structural role and its presence is essential for fluoride channel function. Functionally, fluoride-specific ion channel. Important for reducing fluoride concentration in the cell, thus reducing its toxicity. The sequence is that of Fluoride-specific ion channel FluC from Magnetococcus marinus (strain ATCC BAA-1437 / JCM 17883 / MC-1).